The sequence spans 2715 residues: Chromodomain-helicase-DNA-binding protein 6 (2715 aa).

The segment covering 1-11 (MKMKIQKKEKQ) has biased composition (basic and acidic residues). Disordered stretches follow at residues 1 to 30 (MKMK…SVNF) and 66 to 244 (EEAA…QVKR). Positions 1 to 747 (MKMKIQKKEK…MMELRKCCNH (747 aa)) are required for DNA-dependent ATPase activity. Residues 12–27 (LSNLKVLNHSPMSDAS) are compositionally biased toward polar residues. The span at 123–172 (EPKEPKEPRKAKEPKKAKEHKEPKQKDGAKKARKPREASGTKEAKEKRSC) shows a compositional bias: basic and acidic residues. 2 consecutive Chromo domains span residues 292–343 (NIIE…KDPR) and 375–439 (VEVD…KHVE). In terms of domain architecture, Helicase ATP-binding spans 473–647 (LFNWYNRKNC…FSLLNFLEPS (175 aa)). Residue 486-493 (DEMGLGKT) coordinates ATP. The short motif at 598–601 (DEAH) is the DEAH box element. Residues 787–956 (LIDKLLPKLI…LSKMEVEDLL (170 aa)) enclose the Helicase C-terminal domain. Residues 1318–1390 (KSLSAEQGVT…SDPDKSPWPV (73 aa)) are disordered. Polar residues predominate over residues 1321-1330 (SAEQGVTDGT). 2 stretches are compositionally biased toward basic and acidic residues: residues 1333–1351 (IPER…KVDG) and 1367–1376 (FSEKKDDSRA). Residues 1449-1503 (RWTRREQADFYRTVSSFGVVYDQEKKTFDWTQFRIISRLDKKSDESLEQYFYSFV) enclose the Myb-like domain. Residues 2027–2038 (FENKDDYDRDGN) show a composition bias toward basic and acidic residues. 6 disordered regions span residues 2027–2063 (FENK…ITGD), 2116–2148 (SQQY…AAEH), 2321–2351 (QATL…QAEK), 2373–2422 (PGFG…FLPE), 2547–2602 (TSTA…PAIT), and 2648–2715 (VGLE…NDTN). Polar residues predominate over residues 2116–2141 (SQQYEPSGTLPTPVLTSSAGSRTSLS). Positions 2329 to 2346 (PEGPGPATSAPEPATAAS) are enriched in low complexity. Residues 2547–2560 (TSTAPASLSSTTKS) show a composition bias toward low complexity. Basic and acidic residues-rich tracts occupy residues 2567–2588 (KTAE…EDKP) and 2706–2715 (ALKDSNNDTN).

This sequence belongs to the SNF2/RAD54 helicase family. In terms of assembly, interacts with NFE2L2; involved in activation of the transcription. (Microbial infection) Interacts with the influenza A polymerase complex composed fo PB1, PB2 and PA. As to quaternary structure, (Microbial infection) Interacts (via N-terminus) with human papillomavirus protein E8^E2C (via C-terminus); this interaction induces transcriptional repression of the viral genome. Widely expressed.

It localises to the nucleus. It is found in the nucleoplasm. It carries out the reaction ATP + H2O = ADP + phosphate + H(+). In terms of biological role, ATP-dependent chromatin-remodeling factor. Regulates transcription by disrupting nucleosomes in a largely non-sliding manner which strongly increases the accessibility of chromatin; nucleosome disruption requires ATP. Activates transcription of specific genes in response to oxidative stress through interaction with NFE2L2. Functionally, (Microbial infection) Acts as a transcriptional repressor of different viruses including influenza virus or papillomavirus. During influenza virus infection, the viral polymerase complex localizes CHD6 to inactive chromatin where it gets degraded in a proteasome independent-manner. This is Chromodomain-helicase-DNA-binding protein 6 (CHD6) from Homo sapiens (Human).